Here is a 554-residue protein sequence, read N- to C-terminus: MDSDQTPLINPSLFEECAQNHFAAADSRSRRPFHIEPSYITSINDDEPQRITSEASAMNKRIHYYSKLSYPSGGGLIAPDHVLPAPEEIYVYSPLGTALKIDGSDGSEKNSSIVTIFMIWNTMMGTSILSIPWGIKQAGFTTGVCVLFLMGILTLYCCYRVVKSRGTIPLTDTSTWEFPDVCQYYFGSFGRWSSLLFSMVSLIGAMIVYWVLMSNFLFNTGKFIYNYVNDVNITDDVLSNNGTDKVICPNPDSTGPLNKSMDTYYGNGTNLEHFETWWSKTNTVPFYLVVLLLPLLGFRSPSFFAKFNILGTVSIIYLVSLVTLKAAHLGFHLQFSWNQVQTFFVPEFRVSFPQLTGILTLAFFIHNCIITLLKNNRNQKNNVRDLSIAYLLVGLTYVYVGVVVFASFPSPPLSKQCIEQNFLDNFPSSDILAFVARIFLLFQMMTVYPLLGYLVRVQLLGHIFGDIYPSIFHVLALNIAVVGVGVIMARFYPNIGGIIRFSGAACGLAFVFVYPSLIHMISLHRRGQLRIHSILIHVSIIVLGISNLIAQFFM.

Residues 1–112 (MDSDQTPLIN…GSDGSEKNSS (112 aa)) lie on the Cytoplasmic side of the membrane. The helical transmembrane segment at 113 to 133 (IVTIFMIWNTMMGTSILSIPW) threads the bilayer. Residues 122 to 127 (TMMGTS) form an important for arginine binding and amino acid transport region. S127 serves as a coordination point for arginine. Residues 134–139 (GIKQAG) lie on the Lumenal side of the membrane. Residues 140-160 (FTTGVCVLFLMGILTLYCCYR) form a helical membrane-spanning segment. The Cytoplasmic portion of the chain corresponds to 161-191 (VVKSRGTIPLTDTSTWEFPDVCQYYFGSFGR). The helical transmembrane segment at 192 to 218 (WSSLLFSMVSLIGAMIVYWVLMSNFLF) threads the bilayer. The Lumenal segment spans residues 219–276 (NTGKFIYNYVNDVNITDDVLSNNGTDKVICPNPDSTGPLNKSMDTYYGNGTNLEHFET). N-linked (GlcNAc...) asparagine glycans are attached at residues N232, N241, N258, and N267. C248 and C417 are joined by a disulfide. Residues 277 to 293 (WWSKTNTVPFYLVVLLL) traverse the membrane as a helical segment. The Cytoplasmic portion of the chain corresponds to 294-302 (PLLGFRSPS). A helical transmembrane segment spans residues 303 to 327 (FFAKFNILGTVSIIYLVSLVTLKAA). Residues 328–349 (HLGFHLQFSWNQVQTFFVPEFR) lie on the Lumenal side of the membrane. The helical transmembrane segment at 350–370 (VSFPQLTGILTLAFFIHNCII) threads the bilayer. The Cytoplasmic portion of the chain corresponds to 371 to 387 (TLLKNNRNQKNNVRDLS). The helical transmembrane segment at 388–408 (IAYLLVGLTYVYVGVVVFASF) threads the bilayer. The Lumenal segment spans residues 409-430 (PSPPLSKQCIEQNFLDNFPSSD). A helical membrane pass occupies residues 431–451 (ILAFVARIFLLFQMMTVYPLL). Residues 437 to 447 (RIFLLFQMMTV) carry the CARC motif motif. A CRAC motif motif is present at residues 450–456 (LLGYLVR). Residues 452–472 (GYLVRVQLLGHIFGDIYPSIF) are Cytoplasmic-facing. Residues 473-493 (HVLALNIAVVGVGVIMARFYP) traverse the membrane as a helical segment. Over 494–500 (NIGGIIR) the chain is Lumenal. The chain crosses the membrane as a helical span at residues 501-521 (FSGAACGLAFVFVYPSLIHMI). The Cytoplasmic portion of the chain corresponds to 522–533 (SLHRRGQLRIHS). A helical transmembrane segment spans residues 534–554 (ILIHVSIIVLGISNLIAQFFM).

It belongs to the amino acid/polyamine transporter 2 family. SLC38A9 subfamily. As to quaternary structure, associated component of the Ragulator complex. Associated component of the Rag GTPases heterodimers. In terms of processing, glycosylated.

The protein localises to the lysosome membrane. Its subcellular location is the late endosome membrane. The catalysed reaction is L-leucine(in) = L-leucine(out). The enzyme catalyses L-tyrosine(in) = L-tyrosine(out). It carries out the reaction L-glutamine(out) = L-glutamine(in). It catalyses the reaction L-asparagine(out) = L-asparagine(in). Lysosomal amino acid transporter involved in the activation of mTORC1 in response to amino acid levels. Probably acts as an amino acid sensor of the Rag GTPases and Ragulator complexes, 2 complexes involved in amino acid sensing and activation of mTORC1, a signaling complex promoting cell growth in response to growth factors, energy levels, and amino acids. Following activation by amino acids, the Ragulator and Rag GTPases function as a scaffold recruiting mTORC1 to lysosomes where it is in turn activated. SLC38A9 mediates transport of amino acids with low capacity and specificity with a slight preference for polar amino acids. Acts as an arginine sensor. Following activation by arginine binding, mediates transport of L-glutamine, leucine and tyrosine with high efficiency, and is required for the efficient utilization of these amino acids after lysosomal protein degradation. However, the transport mechanism is not well defined and the role of sodium is not clear. Guanine exchange factor (GEF) that, upon arginine binding, stimulates GDP release from RRAGA and therefore activates the Rag GTPase heterodimer and the mTORC1 pathway in response to nutrient sufficiency. This is Neutral amino acid transporter 9 from Xenopus laevis (African clawed frog).